The chain runs to 807 residues: Glycerol-3-phosphate acyltransferase (807 aa).

An HXXXXD motif motif is present at residues 308–313 (CHRSHM).

Belongs to the GPAT/DAPAT family.

The protein resides in the cell inner membrane. The catalysed reaction is sn-glycerol 3-phosphate + an acyl-CoA = a 1-acyl-sn-glycero-3-phosphate + CoA. It functions in the pathway phospholipid metabolism; CDP-diacylglycerol biosynthesis; CDP-diacylglycerol from sn-glycerol 3-phosphate: step 1/3. This Shewanella baltica (strain OS223) protein is Glycerol-3-phosphate acyltransferase.